Reading from the N-terminus, the 98-residue chain is NADH-ubiquinone oxidoreductase chain 4L (98 aa).

3 helical membrane passes run 1 to 21 (MIPT…GMLT), 27 to 47 (VASL…ATLI), and 61 to 81 (IILL…LISI).

Belongs to the complex I subunit 4L family. As to quaternary structure, core subunit of respiratory chain NADH dehydrogenase (Complex I) which is composed of 45 different subunits.

The protein localises to the mitochondrion inner membrane. The catalysed reaction is a ubiquinone + NADH + 5 H(+)(in) = a ubiquinol + NAD(+) + 4 H(+)(out). Its function is as follows. Core subunit of the mitochondrial membrane respiratory chain NADH dehydrogenase (Complex I) which catalyzes electron transfer from NADH through the respiratory chain, using ubiquinone as an electron acceptor. Part of the enzyme membrane arm which is embedded in the lipid bilayer and involved in proton translocation. This Macaca hecki (Heck's macaque) protein is NADH-ubiquinone oxidoreductase chain 4L (MT-ND4L).